Here is a 449-residue protein sequence, read N- to C-terminus: GTP-binding protein A (449 aa).

The disordered stretch occupies residues 1–77; the sequence is MFNINPYKSK…LSSKTENSLS (77 aa). 2 stretches are compositionally biased toward low complexity: residues 8–46 and 67–77; these read KSKTTKSSSSSSASPKSSKISNVSGSGSSSSSSSSSSSS and SLSSKTENSLS. The 238-residue stretch at 149–386 folds into the AIG1-type G domain; sequence QNECNVLLLG…FMGHLRAKNK (238 aa). A G1 region spans residues 158–165; sequence GRTGVGKS. GTP is bound at residue 158–165; sequence GRTGVGKS. The G2 stretch occupies residues 183 to 187; the sequence is SCTQD. Residues 204–207 are G3; sequence DTPG. Residues 275–278 are G4; it reads TYAN. The segment at 336–338 is G5; that stretch reads ENS.

This sequence belongs to the TRAFAC class TrmE-Era-EngA-EngB-Septin-like GTPase superfamily. AIG1/Toc34/Toc159-like paraseptin GTPase family. IAN subfamily.

This chain is GTP-binding protein A (gtpA), found in Dictyostelium discoideum (Social amoeba).